A 283-amino-acid polypeptide reads, in one-letter code: Phosphatidylserine decarboxylase proenzyme (283 aa).

Active-site charge relay system; for autoendoproteolytic cleavage activity residues include D88, H145, and S248. S248 acts as the Schiff-base intermediate with substrate; via pyruvic acid; for decarboxylase activity in catalysis. The residue at position 248 (S248) is a Pyruvic acid (Ser); by autocatalysis.

Belongs to the phosphatidylserine decarboxylase family. PSD-B subfamily. Prokaryotic type I sub-subfamily. As to quaternary structure, heterodimer of a large membrane-associated beta subunit and a small pyruvoyl-containing alpha subunit. Requires pyruvate as cofactor. In terms of processing, is synthesized initially as an inactive proenzyme. Formation of the active enzyme involves a self-maturation process in which the active site pyruvoyl group is generated from an internal serine residue via an autocatalytic post-translational modification. Two non-identical subunits are generated from the proenzyme in this reaction, and the pyruvate is formed at the N-terminus of the alpha chain, which is derived from the carboxyl end of the proenzyme. The autoendoproteolytic cleavage occurs by a canonical serine protease mechanism, in which the side chain hydroxyl group of the serine supplies its oxygen atom to form the C-terminus of the beta chain, while the remainder of the serine residue undergoes an oxidative deamination to produce ammonia and the pyruvoyl prosthetic group on the alpha chain. During this reaction, the Ser that is part of the protease active site of the proenzyme becomes the pyruvoyl prosthetic group, which constitutes an essential element of the active site of the mature decarboxylase.

The protein localises to the cell membrane. The catalysed reaction is a 1,2-diacyl-sn-glycero-3-phospho-L-serine + H(+) = a 1,2-diacyl-sn-glycero-3-phosphoethanolamine + CO2. The protein operates within phospholipid metabolism; phosphatidylethanolamine biosynthesis; phosphatidylethanolamine from CDP-diacylglycerol: step 2/2. Catalyzes the formation of phosphatidylethanolamine (PtdEtn) from phosphatidylserine (PtdSer). The sequence is that of Phosphatidylserine decarboxylase proenzyme from Acidovorax ebreus (strain TPSY) (Diaphorobacter sp. (strain TPSY)).